We begin with the raw amino-acid sequence, 474 residues long: Adenosylhomocysteinase (474 aa).

Residues Thr61, Asp136, and Glu196 each coordinate substrate. 197–199 (TTT) is an NAD(+) binding site. Lys226 and Asp230 together coordinate substrate. Residues Asn231, 260 to 265 (GYGDVG), Glu283, Asn318, 339 to 341 (IGH), and Asn384 each bind NAD(+).

It belongs to the adenosylhomocysteinase family. Requires NAD(+) as cofactor.

It localises to the cytoplasm. It catalyses the reaction S-adenosyl-L-homocysteine + H2O = L-homocysteine + adenosine. It functions in the pathway amino-acid biosynthesis; L-homocysteine biosynthesis; L-homocysteine from S-adenosyl-L-homocysteine: step 1/1. Functionally, may play a key role in the regulation of the intracellular concentration of adenosylhomocysteine. This chain is Adenosylhomocysteinase, found in Ralstonia nicotianae (strain ATCC BAA-1114 / GMI1000) (Ralstonia solanacearum).